A 185-amino-acid chain; its full sequence is Iron-sulfur assembly protein 2 (185 aa).

Cys89, Cys175, and Cys177 together coordinate Fe cation.

The protein belongs to the HesB/IscA family.

The protein localises to the mitochondrion matrix. Involved in the assembly of mitochondrial and cytoplasmic iron-sulfur proteins. Probably involved in the binding of an intermediate of Fe/S cluster assembly. In Saccharomyces cerevisiae (strain ATCC 204508 / S288c) (Baker's yeast), this protein is Iron-sulfur assembly protein 2 (ISA2).